Consider the following 376-residue polypeptide: Probable deoxyhypusine synthase (376 aa).

Residues 105-109, 131-133, E137, and D238 each bind NAD(+); these read SNLVS and TAG. 136–137 serves as a coordination point for spermidine; it reads EE. D243 contacts spermidine. Residue G283 participates in NAD(+) binding. Position 288 (H288) interacts with spermidine. 308–309 contacts NAD(+); that stretch reads TG. Residues 314 to 316 and 323 to 329 each bind spermidine; these read GSD and EAVSWGK. Catalysis depends on K329, which acts as the Nucleophile. 342–343 provides a ligand contact to NAD(+); sequence EA.

The protein belongs to the deoxyhypusine synthase family. It depends on NAD(+) as a cofactor.

It carries out the reaction [eIF5A protein]-L-lysine + spermidine = [eIF5A protein]-deoxyhypusine + propane-1,3-diamine. Its pathway is protein modification; eIF5A hypusination. In terms of biological role, catalyzes the NAD-dependent oxidative cleavage of spermidine and the subsequent transfer of the butylamine moiety of spermidine to the epsilon-amino group of a critical lysine residue of the eIF-5A precursor protein to form the intermediate deoxyhypusine residue. This is the first step of the post-translational modification of that lysine into an unusual amino acid residue named hypusine. Hypusination is unique to mature eIF-5A factor and is essential for its function. In Dictyostelium discoideum (Social amoeba), this protein is Probable deoxyhypusine synthase (dhps).